Consider the following 378-residue polypeptide: Anhydro-N-acetylmuramic acid kinase (378 aa).

Residue glycine 9 to aspartate 16 coordinates ATP.

This sequence belongs to the anhydro-N-acetylmuramic acid kinase family.

It carries out the reaction 1,6-anhydro-N-acetyl-beta-muramate + ATP + H2O = N-acetyl-D-muramate 6-phosphate + ADP + H(+). Its pathway is amino-sugar metabolism; 1,6-anhydro-N-acetylmuramate degradation. The protein operates within cell wall biogenesis; peptidoglycan recycling. Catalyzes the specific phosphorylation of 1,6-anhydro-N-acetylmuramic acid (anhMurNAc) with the simultaneous cleavage of the 1,6-anhydro ring, generating MurNAc-6-P. Is required for the utilization of anhMurNAc either imported from the medium or derived from its own cell wall murein, and thus plays a role in cell wall recycling. This is Anhydro-N-acetylmuramic acid kinase from Synechococcus sp. (strain ATCC 27144 / PCC 6301 / SAUG 1402/1) (Anacystis nidulans).